The primary structure comprises 535 residues: Prolyl 4-hydroxylase subunit alpha-2 (535 aa).

The N-terminal stretch at 1–21 is a signal peptide; it reads MKLWVSALLMAWFGVLSCVQA. A glycan (N-linked (GlcNAc...) asparagine) is linked at asparagine 115. The stretch at 207-240 is one TPR repeat; it reads SQVLDYLSYAVFQLGDLHRALELTRRLLSLDPSH. An N-linked (GlcNAc...) asparagine glycan is attached at asparagine 264. Residues 412–520 enclose the Fe2OG dioxygenase domain; sequence TAELLQVANY…KWVSNKWFHE (109 aa). The Fe cation site is built by histidine 430 and aspartate 432. Lysine 480 carries the post-translational modification N6-succinyllysine. A Fe cation-binding site is contributed by histidine 501. Lysine 511 provides a ligand contact to 2-oxoglutarate.

This sequence belongs to the P4HA family. In terms of assembly, heterotetramer of two alpha-2 chains and two beta chains (P4HB) (the beta chain is the multi-functional PDI), where P4HB plays the role of a structural subunit; this tetramer catalyzes the formation of 4-hydroxyproline in collagen. It depends on Fe(2+) as a cofactor. Requires L-ascorbate as cofactor. In terms of tissue distribution, expressed in the heart, placenta, lung and pancreas.

It localises to the endoplasmic reticulum lumen. It carries out the reaction L-prolyl-[collagen] + 2-oxoglutarate + O2 = trans-4-hydroxy-L-prolyl-[collagen] + succinate + CO2. With respect to regulation, inhibited by poly(L-proline) only at very high concentrations. Catalyzes the post-translational formation of 4-hydroxyproline in -Xaa-Pro-Gly- sequences in collagens and other proteins. This chain is Prolyl 4-hydroxylase subunit alpha-2 (P4HA2), found in Homo sapiens (Human).